We begin with the raw amino-acid sequence, 438 residues long: Trigger factor (438 aa).

Positions glycine 162–proline 247 constitute a PPIase FKBP-type domain.

Belongs to the FKBP-type PPIase family. Tig subfamily.

The protein localises to the cytoplasm. It carries out the reaction [protein]-peptidylproline (omega=180) = [protein]-peptidylproline (omega=0). Functionally, involved in protein export. Acts as a chaperone by maintaining the newly synthesized protein in an open conformation. Functions as a peptidyl-prolyl cis-trans isomerase. The sequence is that of Trigger factor from Nitrosomonas eutropha (strain DSM 101675 / C91 / Nm57).